The chain runs to 282 residues: Phosphatidylserine decarboxylase proenzyme (282 aa).

Active-site charge relay system; for autoendoproteolytic cleavage activity residues include Asp89, His145, and Ser249. Ser249 functions as the Schiff-base intermediate with substrate; via pyruvic acid; for decarboxylase activity in the catalytic mechanism. Ser249 bears the Pyruvic acid (Ser); by autocatalysis mark.

Belongs to the phosphatidylserine decarboxylase family. PSD-B subfamily. Prokaryotic type I sub-subfamily. As to quaternary structure, heterodimer of a large membrane-associated beta subunit and a small pyruvoyl-containing alpha subunit. Requires pyruvate as cofactor. Is synthesized initially as an inactive proenzyme. Formation of the active enzyme involves a self-maturation process in which the active site pyruvoyl group is generated from an internal serine residue via an autocatalytic post-translational modification. Two non-identical subunits are generated from the proenzyme in this reaction, and the pyruvate is formed at the N-terminus of the alpha chain, which is derived from the carboxyl end of the proenzyme. The autoendoproteolytic cleavage occurs by a canonical serine protease mechanism, in which the side chain hydroxyl group of the serine supplies its oxygen atom to form the C-terminus of the beta chain, while the remainder of the serine residue undergoes an oxidative deamination to produce ammonia and the pyruvoyl prosthetic group on the alpha chain. During this reaction, the Ser that is part of the protease active site of the proenzyme becomes the pyruvoyl prosthetic group, which constitutes an essential element of the active site of the mature decarboxylase.

The protein localises to the cell membrane. The enzyme catalyses a 1,2-diacyl-sn-glycero-3-phospho-L-serine + H(+) = a 1,2-diacyl-sn-glycero-3-phosphoethanolamine + CO2. It participates in phospholipid metabolism; phosphatidylethanolamine biosynthesis; phosphatidylethanolamine from CDP-diacylglycerol: step 2/2. Its function is as follows. Catalyzes the formation of phosphatidylethanolamine (PtdEtn) from phosphatidylserine (PtdSer). This Anaeromyxobacter sp. (strain K) protein is Phosphatidylserine decarboxylase proenzyme.